The chain runs to 133 residues: Small ribosomal subunit protein uS8 (133 aa).

The protein belongs to the universal ribosomal protein uS8 family. Part of the 30S ribosomal subunit. Contacts proteins S5 and S12.

One of the primary rRNA binding proteins, it binds directly to 16S rRNA central domain where it helps coordinate assembly of the platform of the 30S subunit. This chain is Small ribosomal subunit protein uS8, found in Oenococcus oeni (strain ATCC BAA-331 / PSU-1).